The sequence spans 350 residues: CMP-N-acetylneuraminate-beta-galactosamide-alpha-2,3-sialyltransferase 2 (350 aa).

Topologically, residues 1–6 (MKCSLR) are cytoplasmic. Residues 7-27 (VWFLSMAFLLVFIMSLLFTYS) form a helical; Signal-anchor for type II membrane protein membrane-spanning segment. Over 28 to 350 (HHSMATLPYL…ASKIEVYRGN (323 aa)) the chain is Lumenal. Intrachain disulfides connect cysteine 70/cysteine 75, cysteine 72/cysteine 149, and cysteine 152/cysteine 291. Residues glutamine 116, asparagine 157, and asparagine 180 each contribute to the substrate site. The N-linked (GlcNAc...) asparagine glycan is linked to asparagine 211. 6 residues coordinate substrate: tyrosine 240, tyrosine 276, glycine 280, glycine 300, histidine 309, and histidine 326.

The protein belongs to the glycosyltransferase 29 family. Homodimer; disulfide-linked. Homodimer formation occurs in the endoplasmic reticulum. Post-translationally, the soluble form derives from the membrane form by proteolytic processing. In terms of processing, N-glycosylated; necessary for proper exit from endoplasmic reticulum and trafficking to the Golgi apparatus. As to expression, strongly expressed in brain and liver and to a lesser extent in heart and kidney. Scarcely detectable in lung, pancreas, spleen and submaxillary gland. Expressed in L5 dorsal root ganglion (DRG) neurons (at protein level).

It localises to the golgi apparatus. The protein localises to the golgi stack membrane. The protein resides in the secreted. It carries out the reaction a beta-D-galactosyl-(1-&gt;3)-N-acetyl-alpha-D-galactosaminyl derivative + CMP-N-acetyl-beta-neuraminate = an N-acetyl-alpha-neuraminyl-(2-&gt;3)-beta-D-galactosyl-(1-&gt;3)-N-acetyl-alpha-D-galactosaminyl derivative + CMP + H(+). The enzyme catalyses a ganglioside GM1 (d18:1(4E)) + CMP-N-acetyl-beta-neuraminate = a ganglioside GD1a (d18:1(4E)) + CMP + H(+). It catalyses the reaction ganglioside GM1 (d18:1(4E)/18:0) + CMP-N-acetyl-beta-neuraminate = ganglioside GD1a (18:1(4E)/18:0) + CMP + H(+). The catalysed reaction is a ganglioside GA1 + CMP-N-acetyl-beta-neuraminate = a ganglioside GM1b + CMP + H(+). It carries out the reaction a ganglioside GA1 (d18:1(4E)) + CMP-N-acetyl-beta-neuraminate = a ganglioside GM1b (d18:1(4E)) + CMP + H(+). The enzyme catalyses a ganglioside GD1b + CMP-N-acetyl-beta-neuraminate = a ganglioside GT1b + CMP + H(+). It catalyses the reaction a ganglioside GD1b (d18:1(4E)) + CMP-N-acetyl-beta-neuraminate = a ganglioside GT1b (d18:1(4E)) + CMP + H(+). The catalysed reaction is a globoside GalGb4Cer + CMP-N-acetyl-beta-neuraminate = a globoside MSGG + CMP + H(+). Its pathway is protein modification; protein glycosylation. It participates in glycolipid biosynthesis. Its function is as follows. A beta-galactoside alpha2-3 sialyltransferase primarily involved in terminal sialylation of ganglio and globo series glycolipids. Catalyzes the transfer of sialic acid (N-acetyl-neuraminic acid; Neu5Ac) from the nucleotide sugar donor CMP-Neu5Ac onto acceptor Galbeta-(1-&gt;3)-GalNAc-terminated glycoconjugates through an alpha2-3 linkage. Sialylates GM1/GM1a, GA1/asialo-GM1 and GD1b gangliosides to form GD1a, GM1b and GT1b, respectively. Together with ST3GAL3, primarily responsible for biosynthesis of brain GD1a and GT1b that function as ligands for myelin-associated glycoprotein MAG on axons, regulating MAG expression and axonal myelin stability and regeneration. Via GT1b regulates TLR2 signaling in spinal cord microglia in response to nerve injury. Responsible for the sialylation of the pluripotent stem cell- and cancer stem cell-associated antigen SSEA3, forming SSEA4. Sialylates with low efficiency asialofetuin, presumably onto O-glycosidically linked Galbeta-(1-&gt;3)-GalNAc-O-Ser. This chain is CMP-N-acetylneuraminate-beta-galactosamide-alpha-2,3-sialyltransferase 2, found in Mus musculus (Mouse).